Reading from the N-terminus, the 411-residue chain is Dual-specificity RNA methyltransferase RlmN (411 aa).

The active-site Proton acceptor is the Glu125. The Radical SAM core domain occupies Glu131–Leu380. A disulfide bridge connects residues Cys138 and Cys383. Positions 145, 149, and 152 each coordinate [4Fe-4S] cluster. S-adenosyl-L-methionine contacts are provided by residues Gly209–Glu210, Ser241, Ser263–His265, and Asn340. Residue Cys383 is the S-methylcysteine intermediate of the active site.

This sequence belongs to the radical SAM superfamily. RlmN family. Requires [4Fe-4S] cluster as cofactor.

Its subcellular location is the cytoplasm. It carries out the reaction adenosine(2503) in 23S rRNA + 2 reduced [2Fe-2S]-[ferredoxin] + 2 S-adenosyl-L-methionine = 2-methyladenosine(2503) in 23S rRNA + 5'-deoxyadenosine + L-methionine + 2 oxidized [2Fe-2S]-[ferredoxin] + S-adenosyl-L-homocysteine. The catalysed reaction is adenosine(37) in tRNA + 2 reduced [2Fe-2S]-[ferredoxin] + 2 S-adenosyl-L-methionine = 2-methyladenosine(37) in tRNA + 5'-deoxyadenosine + L-methionine + 2 oxidized [2Fe-2S]-[ferredoxin] + S-adenosyl-L-homocysteine. Specifically methylates position 2 of adenine 2503 in 23S rRNA and position 2 of adenine 37 in tRNAs. m2A2503 modification seems to play a crucial role in the proofreading step occurring at the peptidyl transferase center and thus would serve to optimize ribosomal fidelity. The chain is Dual-specificity RNA methyltransferase RlmN from Brucella abortus (strain S19).